Here is a 497-residue protein sequence, read N- to C-terminus: Cysteine--tRNA ligase (497 aa).

Cys46 contributes to the Zn(2+) binding site. Positions Pro48–His58 match the 'HIGH' region motif. Residues Cys237, His262, and Glu266 each coordinate Zn(2+). The short motif at Lys293 to Ser297 is the 'KMSKS' region element. Lys296 contributes to the ATP binding site.

Belongs to the class-I aminoacyl-tRNA synthetase family. In terms of assembly, monomer. Zn(2+) serves as cofactor.

It is found in the cytoplasm. The catalysed reaction is tRNA(Cys) + L-cysteine + ATP = L-cysteinyl-tRNA(Cys) + AMP + diphosphate. The protein is Cysteine--tRNA ligase of Deinococcus geothermalis (strain DSM 11300 / CIP 105573 / AG-3a).